We begin with the raw amino-acid sequence, 107 residues long: Thiosulfate sulfurtransferase GlpE (107 aa).

Residues 19–107 enclose the Rhodanese domain; that stretch reads QDLNAVLVDI…WHKAGLPVEK (89 aa). Catalysis depends on Cys-67, which acts as the Cysteine persulfide intermediate.

This sequence belongs to the GlpE family.

The protein localises to the cytoplasm. The catalysed reaction is thiosulfate + hydrogen cyanide = thiocyanate + sulfite + 2 H(+). The enzyme catalyses thiosulfate + [thioredoxin]-dithiol = [thioredoxin]-disulfide + hydrogen sulfide + sulfite + 2 H(+). Its function is as follows. Transferase that catalyzes the transfer of sulfur from thiosulfate to thiophilic acceptors such as cyanide or dithiols. May function in a CysM-independent thiosulfate assimilation pathway by catalyzing the conversion of thiosulfate to sulfite, which can then be used for L-cysteine biosynthesis. This is Thiosulfate sulfurtransferase GlpE from Aliivibrio fischeri (strain ATCC 700601 / ES114) (Vibrio fischeri).